Consider the following 401-residue polypeptide: Riboflavin biosynthesis protein RibBA (401 aa).

A DHBP synthase region spans residues M1–K203. D-ribulose 5-phosphate contacts are provided by residues R30–E31, D35, R142–T146, and E166. E31 serves as a coordination point for Mg(2+). H145 provides a ligand contact to Mg(2+). The segment at H204–F401 is GTP cyclohydrolase II. Residue R254–E258 participates in GTP binding. Positions 259, 270, and 272 each coordinate Zn(2+). Residues Q275, E297–R299, and T319 each bind GTP. The active-site Proton acceptor; for GTP cyclohydrolase activity is the D331. Catalysis depends on R333, which acts as the Nucleophile; for GTP cyclohydrolase activity. The GTP site is built by T354 and K359.

It in the N-terminal section; belongs to the DHBP synthase family. This sequence in the C-terminal section; belongs to the GTP cyclohydrolase II family. Mg(2+) serves as cofactor. Mn(2+) is required as a cofactor. Requires Zn(2+) as cofactor.

It catalyses the reaction D-ribulose 5-phosphate = (2S)-2-hydroxy-3-oxobutyl phosphate + formate + H(+). The enzyme catalyses GTP + 4 H2O = 2,5-diamino-6-hydroxy-4-(5-phosphoribosylamino)-pyrimidine + formate + 2 phosphate + 3 H(+). Its pathway is cofactor biosynthesis; riboflavin biosynthesis; 2-hydroxy-3-oxobutyl phosphate from D-ribulose 5-phosphate: step 1/1. It functions in the pathway cofactor biosynthesis; riboflavin biosynthesis; 5-amino-6-(D-ribitylamino)uracil from GTP: step 1/4. Its function is as follows. Catalyzes the conversion of D-ribulose 5-phosphate to formate and 3,4-dihydroxy-2-butanone 4-phosphate. Catalyzes the conversion of GTP to 2,5-diamino-6-ribosylamino-4(3H)-pyrimidinone 5'-phosphate (DARP), formate and pyrophosphate. This Actinobacillus pleuropneumoniae serotype 3 (strain JL03) protein is Riboflavin biosynthesis protein RibBA.